The sequence spans 353 residues: MNGTEGPYFYIPMVNTTGIVRSPYEYPQYYLVNPAAYAALGAYMFLLILVGFPINFLTLYVTIEHKKLRTPLNYILLNLAVANLFMVFGGFTTTMYTSMHGYFVLGRLGCNLEGFFATLGGEIALWSLVVLAIERWMVVCKPISNFRFGEDHAIMGLAFTWVMAAACAVPPLVGWSRYIPEGMQCSCGIDYYTRAEGFNNESFVIYMFVCHFLIPLVVVFFCYGRLLCAVKEAAAAQQESETTQRAEREVSRMVVIMVVAFLICWCPYAGVAWYIFTHQGSEFGPLFMTFPAFFAKSSSIYNPMIYICMNKQFRHCMITTLCCGKNPFEEEEGASTTSKTEASSVSSSSVSPA.

Topologically, residues 1–36 (MNGTEGPYFYIPMVNTTGIVRSPYEYPQYYLVNPAA) are extracellular. 2 N-linked (GlcNAc...) asparagine glycosylation sites follow: N2 and N15. A helical transmembrane segment spans residues 37 to 61 (YAALGAYMFLLILVGFPINFLTLYV). The Cytoplasmic portion of the chain corresponds to 62 to 73 (TIEHKKLRTPLN). Residues 74–96 (YILLNLAVANLFMVFGGFTTTMY) form a helical membrane-spanning segment. Over 97-110 (TSMHGYFVLGRLGC) the chain is Extracellular. C110 and C187 form a disulfide bridge. Residues 111–133 (NLEGFFATLGGEIALWSLVVLAI) traverse the membrane as a helical segment. The 'Ionic lock' involved in activated form stabilization signature appears at 134–136 (ERW). The Cytoplasmic portion of the chain corresponds to 134 to 152 (ERWMVVCKPISNFRFGEDH). The chain crosses the membrane as a helical span at residues 153-173 (AIMGLAFTWVMAAACAVPPLV). The Extracellular segment spans residues 174–202 (GWSRYIPEGMQCSCGIDYYTRAEGFNNES). N200 carries an N-linked (GlcNAc...) asparagine glycan. The helical transmembrane segment at 203 to 224 (FVIYMFVCHFLIPLVVVFFCYG) threads the bilayer. At 225 to 252 (RLLCAVKEAAAAQQESETTQRAEREVSR) the chain is on the cytoplasmic side. The chain crosses the membrane as a helical span at residues 253-274 (MVVIMVVAFLICWCPYAGVAWY). Over 275–286 (IFTHQGSEFGPL) the chain is Extracellular. A helical membrane pass occupies residues 287-308 (FMTFPAFFAKSSSIYNPMIYIC). The residue at position 296 (K296) is an N6-(retinylidene)lysine. Over 309-353 (MNKQFRHCMITTLCCGKNPFEEEEGASTTSKTEASSVSSSSVSPA) the chain is Cytoplasmic. Residues C322 and C323 are each lipidated (S-palmitoyl cysteine). Residues 330–353 (EEEGASTTSKTEASSVSSSSVSPA) are disordered. Low complexity predominate over residues 334 to 353 (ASTTSKTEASSVSSSSVSPA).

This sequence belongs to the G-protein coupled receptor 1 family. Opsin subfamily. In terms of processing, phosphorylated on some or all of the serine and threonine residues present in the C-terminal region. Post-translationally, contains one covalently linked retinal chromophore.

Its subcellular location is the membrane. It is found in the cell projection. It localises to the cilium. The protein localises to the photoreceptor outer segment. In terms of biological role, photoreceptor required for image-forming vision at low light intensity. While most salt water fish species use retinal as chromophore, most freshwater fish use 3-dehydroretinal, or a mixture of retinal and 3-dehydroretinal. Light-induced isomerization of 11-cis to all-trans retinal triggers a conformational change that activates signaling via G-proteins. Subsequent receptor phosphorylation mediates displacement of the bound G-protein alpha subunit by arrestin and terminates signaling. The polypeptide is Rhodopsin (rho) (Chelon saliens (Leaping mullet)).